Reading from the N-terminus, the 236-residue chain is Small ribosomal subunit protein uS2c (236 aa).

Belongs to the universal ribosomal protein uS2 family.

It localises to the plastid. The protein localises to the chloroplast. This chain is Small ribosomal subunit protein uS2c (rps2), found in Barbarea verna (Land cress).